Reading from the N-terminus, the 388-residue chain is Galactokinase (388 aa).

33–36 (EHTD) serves as a coordination point for substrate. Residues serine 67 and 124–130 (GAGLSSS) contribute to the ATP site. Serine 130 and glutamate 162 together coordinate Mg(2+). The active-site Proton acceptor is aspartate 174. Residue tyrosine 224 participates in substrate binding.

Belongs to the GHMP kinase family. GalK subfamily.

It is found in the cytoplasm. The catalysed reaction is alpha-D-galactose + ATP = alpha-D-galactose 1-phosphate + ADP + H(+). The protein operates within carbohydrate metabolism; galactose metabolism. Catalyzes the transfer of the gamma-phosphate of ATP to D-galactose to form alpha-D-galactose-1-phosphate (Gal-1-P). The chain is Galactokinase from Lacticaseibacillus paracasei (strain ATCC 334 / BCRC 17002 / CCUG 31169 / CIP 107868 / KCTC 3260 / NRRL B-441) (Lactobacillus paracasei).